An 80-amino-acid polypeptide reads, in one-letter code: Raniseptin-4 (80 aa).

An N-terminal signal peptide occupies residues 1 to 22; that stretch reads MAFLKKSLFLVLFLGIVSLSIC. The propeptide occupies 23 to 49; the sequence is EEEKREGEEEEKQEEENEELSEEELRD.

Belongs to the frog skin active peptide (FSAP) family. Dermaseptin subfamily. As to expression, expressed by the skin glands.

The protein localises to the secreted. Functionally, has antibacterial activity. The polypeptide is Raniseptin-4 (Boana raniceps (Chaco tree frog)).